We begin with the raw amino-acid sequence, 201 residues long: Ras-related protein Rab-35 (201 aa).

Residues Gly-18, Val-19, Gly-20, Lys-21, Ser-22, Ser-23, Ser-34, Gly-35, Tyr-37, Thr-39, and Thr-40 each coordinate GTP. Ser-22 is a binding site for Mg(2+). Positions 30 to 42 (DNTFSGSYITTIG) match the Switch 1 motif. 2 residues coordinate Mg(2+): Thr-40 and Asp-63. A Switch 2 motif is present at residues 64 to 80 (TAGQERFRTITSTYYRG). Gly-66 lines the GTP pocket. A Phosphothreonine; by LRRK2 modification is found at Thr-72. Residue Ser-75 is modified to O-(2-cholinephosphoryl)serine. Tyr-77 carries the post-translational modification O-AMP-tyrosine. GTP-binding residues include Asn-120, Lys-121, Asp-123, Ala-151, and Lys-152. Residues Cys-200 and Cys-201 are each lipidated (S-geranylgeranyl cysteine).

The protein belongs to the small GTPase superfamily. Rab family. In terms of assembly, interacts with DENND1A and DENND1B; in a nucleotide-dependent manner. Interacts with DENND1C; weak interaction which is nucleotide-independent. Interacts (GTP-bound form) with ACAP2, RUSC2, OCRL MICAL1 and MICALL1; the interaction is direct and probably recruits these effectors to membranes. Interacts with EHD1; the interaction is indirect through MICALL1 and probably recruits EHD1 to membranes. Interacts with GDI1, GDI2, CHM and CHML; phosphorylation at Thr-72 by LRRK2 disrupts these interactions. Mg(2+) serves as cofactor. In terms of processing, phosphorylation at Thr-72 by LRRK2 prevents the association of regulatory proteins including CHM, CHML and GDP dissociation inhibitors GDI1 and GDI2. Post-translationally, AMPylation at Tyr-77 by L.pneumophila DrrA occurs in the switch 2 region and leads to moderate inactivation of the GTPase activity. It appears to prolong the lifetime of the GTP state of RAB1B by restricting access of GTPase effectors to switch 2 and blocking effector-stimulated GTP hydrolysis, thereby rendering RAB35 constitutively active. Phosphocholinated by L.pneumophila AnkX. Both GDP-bound and GTP-bound forms can be phosphocholinated. Phosphocholination inhibits the GEF activity of DENND1A.

It is found in the cell membrane. The protein resides in the membrane. The protein localises to the clathrin-coated pit. It localises to the cytoplasmic vesicle. Its subcellular location is the clathrin-coated vesicle. It is found in the endosome. The protein resides in the melanosome. It catalyses the reaction GTP + H2O = GDP + phosphate + H(+). With respect to regulation, regulated by guanine nucleotide exchange factors (GEFs) including DENND1A, DENND1B and DENND1C which promote the exchange of bound GDP for free GTP. Regulated by GTPase activating proteins (GAPs) including TBC1D10 and TBC1D13 which increase GTP hydrolysis activity. Inhibited by GDP dissociation inhibitors (GDIs) which prevent Rab-GDP dissociation. The small GTPases Rab are key regulators of intracellular membrane trafficking, from the formation of transport vesicles to their fusion with membranes. Rabs cycle between an inactive GDP-bound form and an active GTP-bound form that is able to recruit to membranes different sets of downstream effectors directly responsible for vesicle formation, movement, tethering and fusion. RAB35 is involved in the process of endocytosis and is an essential rate-limiting regulator of the fast recycling pathway back to the plasma membrane. During cytokinesis, required for the postfurrowing terminal steps, namely for intercellular bridge stability and abscission, possibly by controlling phosphatidylinositol 4,5-bis phosphate (PIP2) and SEPT2 localization at the intercellular bridge. May indirectly regulate neurite outgrowth. Together with TBC1D13 may be involved in regulation of insulin-induced glucose transporter SLC2A4/GLUT4 translocation to the plasma membrane in adipocytes. The polypeptide is Ras-related protein Rab-35 (Homo sapiens (Human)).